Here is a 476-residue protein sequence, read N- to C-terminus: MSESSHVGLWNRCLEIIRDNVPESTYKTWFVPIVPLKYEDKTLIVQVPSQFFYEFLEDKFVDLLRKTLYKVIGDGTKLMYNVLVDKSSGATVNQESTTRSTAIPQSGLPRVDERKAPGLLRAPAVQDLDPHLNPNYNFETFIEGYSNKLSRSVAEAVAENPAKTVFNPLFLHGASGVGKTHLANAIGTRIKELYPDKRVLYVSAHLFQVQYTDSVRNNTTNDFINFYQTIDVLIIDDIQEFAGVTKTQNTFFHIFNHLHQNGKQLILTSDRAPVLLQGMEERLLTRFKWGMVAELEKPTVELRKNILRNKIHRDGLQFPSEVIDYIAENVNESVRDLEGIVISIMAHSTIYNKEIDLDLAQRIVRKVVRCETKAVTIDDIINVVCKHFDLESSAIHTKSRKREVVQARQVAMYLAKTHTDFSTSKIGKFIGNKDHATVLHACKTVKGQCEVDKGFRSDLENIETLLKKRNVSNGER.

Residues Met1–Ser87 form a domain I, interacts with DnaA modulators region. Positions Ser87–Pro130 are domain II. The interval His131–Ser348 is domain III, AAA+ region. ATP-binding residues include Gly176, Gly178, Lys179, and Thr180. The tract at residues Thr349–Arg476 is domain IV, binds dsDNA.

Belongs to the DnaA family. As to quaternary structure, oligomerizes as a right-handed, spiral filament on DNA at oriC.

The protein resides in the cytoplasm. Its function is as follows. Plays an essential role in the initiation and regulation of chromosomal replication. ATP-DnaA binds to the origin of replication (oriC) to initiate formation of the DNA replication initiation complex once per cell cycle. Binds the DnaA box (a 9 base pair repeat at the origin) and separates the double-stranded (ds)DNA. Forms a right-handed helical filament on oriC DNA; dsDNA binds to the exterior of the filament while single-stranded (ss)DNA is stabiized in the filament's interior. The ATP-DnaA-oriC complex binds and stabilizes one strand of the AT-rich DNA unwinding element (DUE), permitting loading of DNA polymerase. After initiation quickly degrades to an ADP-DnaA complex that is not apt for DNA replication. Binds acidic phospholipids. The sequence is that of Chromosomal replication initiator protein DnaA from Bacteroides fragilis (strain YCH46).